Consider the following 202-residue polypeptide: Glycerol-3-phosphate acyltransferase (202 aa).

The next 4 membrane-spanning stretches (helical) occupy residues 2–22 (ANLL…AVVV), 82–102 (DTGL…PVFH), 119–139 (AIDP…AFFF), and 158–178 (VLMN…VLLI).

This sequence belongs to the PlsY family. In terms of assembly, probably interacts with PlsX.

It localises to the cell inner membrane. It carries out the reaction an acyl phosphate + sn-glycerol 3-phosphate = a 1-acyl-sn-glycero-3-phosphate + phosphate. It functions in the pathway lipid metabolism; phospholipid metabolism. In terms of biological role, catalyzes the transfer of an acyl group from acyl-phosphate (acyl-PO(4)) to glycerol-3-phosphate (G3P) to form lysophosphatidic acid (LPA). This enzyme utilizes acyl-phosphate as fatty acyl donor, but not acyl-CoA or acyl-ACP. This chain is Glycerol-3-phosphate acyltransferase, found in Cupriavidus taiwanensis (strain DSM 17343 / BCRC 17206 / CCUG 44338 / CIP 107171 / LMG 19424 / R1) (Ralstonia taiwanensis (strain LMG 19424)).